The sequence spans 513 residues: ATP synthase subunit alpha 2 (513 aa).

Residue 169 to 176 (GDRQTGKT) participates in ATP binding.

This sequence belongs to the ATPase alpha/beta chains family. As to quaternary structure, F-type ATPases have 2 components, CF(1) - the catalytic core - and CF(0) - the membrane proton channel. CF(1) has five subunits: alpha(3), beta(3), gamma(1), delta(1), epsilon(1). CF(0) has three main subunits: a(1), b(2) and c(9-12). The alpha and beta chains form an alternating ring which encloses part of the gamma chain. CF(1) is attached to CF(0) by a central stalk formed by the gamma and epsilon chains, while a peripheral stalk is formed by the delta and b chains.

Its subcellular location is the cell inner membrane. The catalysed reaction is ATP + H2O + 4 H(+)(in) = ADP + phosphate + 5 H(+)(out). Produces ATP from ADP in the presence of a proton gradient across the membrane. The alpha chain is a regulatory subunit. The sequence is that of ATP synthase subunit alpha 2 from Pseudoalteromonas atlantica (strain T6c / ATCC BAA-1087).